We begin with the raw amino-acid sequence, 373 residues long: Putative citrate synthase 2 (373 aa).

Catalysis depends on residues H250 and E303.

It belongs to the citrate synthase family.

It carries out the reaction oxaloacetate + acetyl-CoA + H2O = citrate + CoA + H(+). The protein operates within carbohydrate metabolism; tricarboxylic acid cycle; isocitrate from oxaloacetate: step 1/2. The sequence is that of Putative citrate synthase 2 (citA) from Mycobacterium bovis (strain ATCC BAA-935 / AF2122/97).